The primary structure comprises 90 residues: Acylphosphatase (90 aa).

Residues 3-90 (NYKIIVFGTV…KTYNDFSVTY (88 aa)) form the Acylphosphatase-like domain. Residues arginine 18 and asparagine 36 contribute to the active site.

This sequence belongs to the acylphosphatase family.

The enzyme catalyses an acyl phosphate + H2O = a carboxylate + phosphate + H(+). The polypeptide is Acylphosphatase (acyP) (Ligilactobacillus salivarius (strain UCC118) (Lactobacillus salivarius)).